Reading from the N-terminus, the 156-residue chain is Transthyretin-like protein 1 (156 aa).

The first 17 residues, 1 to 17, serve as a signal peptide directing secretion; sequence MKIALSFLFLTSTFSNA. N151 carries an N-linked (GlcNAc...) asparagine glycan.

It belongs to the nematode transthyretin-like family.

The protein localises to the secreted. The protein is Transthyretin-like protein 1 (ttr-1) of Caenorhabditis elegans.